Here is a 106-residue protein sequence, read N- to C-terminus: UPF0145 protein CPE0882 (106 aa).

Belongs to the UPF0145 family.

In Clostridium perfringens (strain 13 / Type A), this protein is UPF0145 protein CPE0882.